We begin with the raw amino-acid sequence, 422 residues long: UDP-N-acetylglucosamine 1-carboxyvinyltransferase (422 aa).

24 to 25 (KN) is a binding site for phosphoenolpyruvate. Arg-93 contacts UDP-N-acetyl-alpha-D-glucosamine. Cys-117 serves as the catalytic Proton donor. Position 117 is a 2-(S-cysteinyl)pyruvic acid O-phosphothioketal (Cys-117). Residues 122–126 (RPVDL), 162–165 (KVSV), Asp-307, and Ile-329 contribute to the UDP-N-acetyl-alpha-D-glucosamine site.

The protein belongs to the EPSP synthase family. MurA subfamily.

It localises to the cytoplasm. It catalyses the reaction phosphoenolpyruvate + UDP-N-acetyl-alpha-D-glucosamine = UDP-N-acetyl-3-O-(1-carboxyvinyl)-alpha-D-glucosamine + phosphate. It functions in the pathway cell wall biogenesis; peptidoglycan biosynthesis. Functionally, cell wall formation. Adds enolpyruvyl to UDP-N-acetylglucosamine. The chain is UDP-N-acetylglucosamine 1-carboxyvinyltransferase from Vibrio atlanticus (strain LGP32) (Vibrio splendidus (strain Mel32)).